A 218-amino-acid polypeptide reads, in one-letter code: UPF0502 protein Shewana3_1622 (218 aa).

This sequence belongs to the UPF0502 family.

In Shewanella sp. (strain ANA-3), this protein is UPF0502 protein Shewana3_1622.